The following is a 144-amino-acid chain: Ribonuclease H (144 aa).

Residues 1 to 136 form the RNase H type-1 domain; the sequence is MKIVTLFSDG…CDQMARNEAL (136 aa). Residues Asp9, Glu47, Asp69, and Asp128 each coordinate Mg(2+).

The protein belongs to the RNase H family. Monomer. Mg(2+) is required as a cofactor.

The protein localises to the cytoplasm. It carries out the reaction Endonucleolytic cleavage to 5'-phosphomonoester.. In terms of biological role, endonuclease that specifically degrades the RNA of RNA-DNA hybrids. The sequence is that of Ribonuclease H from Campylobacter concisus (strain 13826).